A 352-amino-acid polypeptide reads, in one-letter code: Putative KilA-N domain-containing protein 006L (352 aa).

In terms of domain architecture, KilA-N spans 15-123 (TFYKGLFGDF…DKCNNIIINY (109 aa)). Residues 129 to 236 (KTMDKKTLQS…KIDNIQNKLE (108 aa)) are a coiled coil.

Belongs to the IIV-6 006L/238R/313L/468L family.

The protein is Putative KilA-N domain-containing protein 006L of Acheta domesticus (House cricket).